Here is a 122-residue protein sequence, read N- to C-terminus: Large ribosomal subunit protein uL14 (122 aa).

It belongs to the universal ribosomal protein uL14 family. Part of the 50S ribosomal subunit. Forms a cluster with proteins L3 and L19. In the 70S ribosome, L14 and L19 interact and together make contacts with the 16S rRNA in bridges B5 and B8.

In terms of biological role, binds to 23S rRNA. Forms part of two intersubunit bridges in the 70S ribosome. The polypeptide is Large ribosomal subunit protein uL14 (Streptococcus suis (strain 05ZYH33)).